An 88-amino-acid chain; its full sequence is Small ribosomal subunit protein bS16 (88 aa).

This sequence belongs to the bacterial ribosomal protein bS16 family.

This Pelotomaculum thermopropionicum (strain DSM 13744 / JCM 10971 / SI) protein is Small ribosomal subunit protein bS16.